We begin with the raw amino-acid sequence, 294 residues long: Non-selective voltage-gated ion channel VDAC2 (294 aa).

Ala2 is subject to N-acetylalanine. The ATP site is built by Lys23 and Lys31. Residue Lys31 is modified to N6-acetyllysine; alternate. Lys31 carries the post-translational modification N6-succinyllysine; alternate. Lys31 is covalently cross-linked (Glycyl lysine isopeptide (Lys-Gly) (interchain with G-Cter in ubiquitin); alternate). The next 2 beta stranded transmembrane spans lie at 37-46 (LVKLDVKTKS) and 50-58 (VEFSTSGSS). A Glycyl lysine isopeptide (Lys-Gly) (interchain with G-Cter in ubiquitin) cross-link involves residue Lys64. The chain crosses the membrane as a beta stranded span at residues 65–75 (VTGTLETKYKW). Tyr78 bears the Phosphotyrosine mark. A run of 3 beta stranded transmembrane segments spans residues 80–87 (LTFTEKWN), 91–100 (TLGTEIAIED), and 106–115 (LKLTFDTTFS). Thr118 carries the phosphothreonine modification. Lys120 is subject to N6-acetyllysine; alternate. A Glycyl lysine isopeptide (Lys-Gly) (interchain with G-Cter in ubiquitin); alternate cross-link involves residue Lys120. Residue Lys121 forms a Glycyl lysine isopeptide (Lys-Gly) (interchain with G-Cter in ubiquitin) linkage. 4 consecutive transmembrane segments (beta stranded) span residues 122–131 (SGKIKSSYKR), 134–141 (VNLGCDVD), 148–156 (AIHGSAVFG), and 161–169 (LAGYQMTFD). Lys172 is covalently cross-linked (Glycyl lysine isopeptide (Lys-Gly) (interchain with G-Cter in ubiquitin)). The next 6 membrane-spanning stretches (beta stranded) occupy residues 174-186 (KLTR…GYRT), 189-196 (FQLHTNVN), 200-209 (EFGGSIYQKV), 213-222 (LDTSVNLAWT), 229-238 (RFGIAAKYQL), and 242-249 (ASISAKVN). Ser251 carries the phosphoserine modification. NAD(+) contacts are provided by residues 253-255 (LIG) and 271-275 (SALVD). 2 beta stranded membrane-spanning segments follow: residues 253–262 (LIGVGYTQTL) and 265–274 (GVKLTLSALV). Lys277 carries the post-translational modification N6-acetyllysine; alternate. Lys277 is covalently cross-linked (Glycyl lysine isopeptide (Lys-Gly) (interchain with G-Cter in ubiquitin); alternate). A beta stranded transmembrane segment spans residues 284-293 (HKLGLALELE).

Belongs to the eukaryotic mitochondrial porin family. In terms of assembly, monomer, homodimer and higher order oligomers; formation of higher order structures is necessary for scramblase activity. Interacts with ARMC12 in a TBC1D21-dependent manner. Interacts with KLC3. Interacts with SPATA33. Interacts with PPP3CC in a SPATA33-dependent manner. Post-translationally, ubiquitinated by PRKN during mitophagy, leading to its degradation and enhancement of mitophagy. Deubiquitinated by USP30.

The protein resides in the mitochondrion outer membrane. The protein localises to the membrane. It carries out the reaction chloride(in) = chloride(out). It catalyses the reaction K(+)(in) = K(+)(out). The catalysed reaction is a 1,2-diacyl-sn-glycero-3-phospho-L-serine(in) = a 1,2-diacyl-sn-glycero-3-phospho-L-serine(out). The enzyme catalyses a 1,2-diacyl-sn-glycero-3-phosphocholine(in) = a 1,2-diacyl-sn-glycero-3-phosphocholine(out). It carries out the reaction a 1,2-diacyl-sn-glycero-3-phospho-(1D-myo-inositol)(in) = a 1,2-diacyl-sn-glycero-3-phospho-(1D-myo-inositol)(out). In terms of biological role, non-selective voltage-gated ion channel that mediates the transport of anions and cations through the mitochondrion outer membrane and plasma membrane. The channel adopts an open conformation at zero mV and a closed conformation at both positive and negative potentials. There are two populations of channels; the main that functions in a lower open-state conductance with lower ion selectivity, that switch, in a voltage-dependent manner, from the open to a low-conducting 'closed' state and the other that has a normal ion selectivity in the typical high conductance, 'open' state. Binds various lipids, including the sphingolipid ceramide, the phospholipid phosphatidylcholine, and the sterols cholesterol and oxysterol. Binding of ceramide promotes the mitochondrial outer membrane permeabilization (MOMP) apoptotic pathway. Functionally, catalyzes the scrambling of phospholipids across the outer mitochondrial membrane; the mechanism is unrelated to channel activity and is capable of translocating both anionic and zwitterionic phospholipids. The polypeptide is Non-selective voltage-gated ion channel VDAC2 (Sus scrofa (Pig)).